We begin with the raw amino-acid sequence, 577 residues long: Chaperonin CPN60-1, mitochondrial (577 aa).

A mitochondrion-targeting transit peptide spans 1–34; sequence MYRAAASLASKARQAGNSLATRQVGSRLAWSRNY.

This sequence belongs to the chaperonin (HSP60) family.

It is found in the mitochondrion. Functionally, implicated in mitochondrial protein import and macromolecular assembly. May facilitate the correct folding of imported proteins. May also prevent misfolding and promote the refolding and proper assembly of unfolded polypeptides generated under stress conditions in the mitochondrial matrix. This chain is Chaperonin CPN60-1, mitochondrial (CPN60I), found in Zea mays (Maize).